The sequence spans 448 residues: NADP-specific glutamate dehydrogenase (448 aa).

3 residues coordinate substrate: K88, Q109, and K112. K124 acts as the Proton donor in catalysis. Substrate is bound at residue G163. 2 residues coordinate NADP(+): T207 and N238. S381 serves as a coordination point for substrate.

Belongs to the Glu/Leu/Phe/Val dehydrogenases family. Homohexamer.

It catalyses the reaction L-glutamate + NADP(+) + H2O = 2-oxoglutarate + NH4(+) + NADPH + H(+). Functionally, catalyzes the reversible oxidative deamination of glutamate to alpha-ketoglutarate and ammonia. The polypeptide is NADP-specific glutamate dehydrogenase (gdhA) (Helicobacter pylori (strain J99 / ATCC 700824) (Campylobacter pylori J99)).